A 271-amino-acid chain; its full sequence is Putative pyruvate, phosphate dikinase regulatory protein (271 aa).

Residue 150 to 157 (GVSRTSKT) participates in ADP binding.

Belongs to the pyruvate, phosphate/water dikinase regulatory protein family. PDRP subfamily.

It catalyses the reaction N(tele)-phospho-L-histidyl/L-threonyl-[pyruvate, phosphate dikinase] + ADP = N(tele)-phospho-L-histidyl/O-phospho-L-threonyl-[pyruvate, phosphate dikinase] + AMP + H(+). It carries out the reaction N(tele)-phospho-L-histidyl/O-phospho-L-threonyl-[pyruvate, phosphate dikinase] + phosphate + H(+) = N(tele)-phospho-L-histidyl/L-threonyl-[pyruvate, phosphate dikinase] + diphosphate. Its function is as follows. Bifunctional serine/threonine kinase and phosphorylase involved in the regulation of the pyruvate, phosphate dikinase (PPDK) by catalyzing its phosphorylation/dephosphorylation. In Oceanobacillus iheyensis (strain DSM 14371 / CIP 107618 / JCM 11309 / KCTC 3954 / HTE831), this protein is Putative pyruvate, phosphate dikinase regulatory protein.